The following is a 234-amino-acid chain: Large ribosomal subunit protein uL1 (234 aa).

This sequence belongs to the universal ribosomal protein uL1 family. As to quaternary structure, part of the 50S ribosomal subunit.

Binds directly to 23S rRNA. The L1 stalk is quite mobile in the ribosome, and is involved in E site tRNA release. In terms of biological role, protein L1 is also a translational repressor protein, it controls the translation of the L11 operon by binding to its mRNA. In Desulfosudis oleivorans (strain DSM 6200 / JCM 39069 / Hxd3) (Desulfococcus oleovorans), this protein is Large ribosomal subunit protein uL1.